We begin with the raw amino-acid sequence, 241 residues long: Glucosamine-6-phosphate deaminase (241 aa).

Asp-67 functions as the Proton acceptor; for enolization step in the catalytic mechanism. The active-site For ring-opening step is the Asn-136. His-138 functions as the Proton acceptor; for ring-opening step in the catalytic mechanism. Glu-143 functions as the For ring-opening step in the catalytic mechanism.

It belongs to the glucosamine/galactosamine-6-phosphate isomerase family. NagB subfamily.

The enzyme catalyses alpha-D-glucosamine 6-phosphate + H2O = beta-D-fructose 6-phosphate + NH4(+). It functions in the pathway amino-sugar metabolism; N-acetylneuraminate degradation; D-fructose 6-phosphate from N-acetylneuraminate: step 5/5. Catalyzes the reversible isomerization-deamination of glucosamine 6-phosphate (GlcN6P) to form fructose 6-phosphate (Fru6P) and ammonium ion. The protein is Glucosamine-6-phosphate deaminase of Bacillus pumilus (strain SAFR-032).